The primary structure comprises 161 residues: Putative 4-hydroxy-4-methyl-2-oxoglutarate aldolase (161 aa).

Substrate-binding positions include 75–78 (GDML) and R97. An a divalent metal cation-binding site is contributed by D98.

It belongs to the class II aldolase/RraA-like family. In terms of assembly, homotrimer. Requires a divalent metal cation as cofactor.

It catalyses the reaction 4-hydroxy-4-methyl-2-oxoglutarate = 2 pyruvate. The enzyme catalyses oxaloacetate + H(+) = pyruvate + CO2. Its function is as follows. Catalyzes the aldol cleavage of 4-hydroxy-4-methyl-2-oxoglutarate (HMG) into 2 molecules of pyruvate. Also contains a secondary oxaloacetate (OAA) decarboxylase activity due to the common pyruvate enolate transition state formed following C-C bond cleavage in the retro-aldol and decarboxylation reactions. This is Putative 4-hydroxy-4-methyl-2-oxoglutarate aldolase from Marinomonas sp. (strain MWYL1).